The chain runs to 327 residues: Protein-L-isoaspartate O-methyltransferase (327 aa).

2 disordered regions span residues 1–38 (MSGERAKRFPLALEDLKREPRKPEGRAAERQAAGDAAR) and 62–105 (PRAA…KSAT). The segment covering 14 to 29 (EDLKREPRKPEGRAAE) has biased composition (basic and acidic residues). Over residues 62–77 (PRAAGASGSGVPVAKP) the composition is skewed to low complexity. Residues 92 to 105 (APSSGVKNGDKSAT) show a composition bias toward polar residues. Residue Ser175 is part of the active site.

It belongs to the methyltransferase superfamily. L-isoaspartyl/D-aspartyl protein methyltransferase family.

It localises to the cytoplasm. The enzyme catalyses [protein]-L-isoaspartate + S-adenosyl-L-methionine = [protein]-L-isoaspartate alpha-methyl ester + S-adenosyl-L-homocysteine. In terms of biological role, catalyzes the methyl esterification of L-isoaspartyl residues in peptides and proteins that result from spontaneous decomposition of normal L-aspartyl and L-asparaginyl residues. It plays a role in the repair and/or degradation of damaged proteins. The polypeptide is Protein-L-isoaspartate O-methyltransferase (Burkholderia thailandensis (strain ATCC 700388 / DSM 13276 / CCUG 48851 / CIP 106301 / E264)).